Reading from the N-terminus, the 248-residue chain is MAGHSKWSQIKRSKAVVDAKRGAVFTRLAREISVAARSGGDPNGNFQLRTAINKAKAARMPAANIERAIAKGSGHDQHGACQLEAIRYEGYGPGGVAVLIEALTDNRNRTAADLRLTFNKHGGKLGESGCVAYLFEQRSEVYLSAQSAQDGGKVSEDALLENLLELEADGYQLIDDGGAVVYGPFQALEGLQAGLRDQGWIIEGWEHCWRPLTTISQADQKSEDQCLQLLDALDELDDVHHISSNLES.

It belongs to the TACO1 family.

Its subcellular location is the cytoplasm. This chain is Probable transcriptional regulatory protein P9303_05381, found in Prochlorococcus marinus (strain MIT 9303).